Reading from the N-terminus, the 423-residue chain is Mannan endo-1,4-beta-mannosidase (423 aa).

An N-terminal signal peptide occupies residues 1-27 (MKTITTARLPWAAQSFALGICLIALLG). The region spanning 56–409 (METRSLFAFM…YADEFTAFNR (354 aa)) is the GH26 domain. Residues Glu-121, His-143, and Trp-162 each contribute to the substrate site. Glu-212 acts as the Proton donor in catalysis. Positions 217 and 285 each coordinate substrate. Catalysis depends on Glu-320, which acts as the Nucleophile. Residues 360 to 361 (WR) and His-377 contribute to the substrate site.

It belongs to the glycosyl hydrolase 26 family. As to quaternary structure, homodimer.

The enzyme catalyses Random hydrolysis of (1-&gt;4)-beta-D-mannosidic linkages in mannans, galactomannans and glucomannans.. Its function is as follows. Catalyzes the endo hydrolysis of beta-1,4-linked mannan and galactomannan, but displays little activity towards other polysaccharides located in the plant cell wall. Preferentially hydrolyzes the larger oligosaccharides and has greater activity against non-substituted polysaccharides. It displays tight specificity for mannose at both the -2 and the -1 subsites. Appears to act in synergy with alpha-galactosidase (AgaA) to elicit hydrolysis of galactomannan. The polypeptide is Mannan endo-1,4-beta-mannosidase (Cellvibrio japonicus (strain Ueda107) (Pseudomonas fluorescens subsp. cellulosa)).